A 124-amino-acid polypeptide reads, in one-letter code: Cytoinsectotoxin-4 (124 aa).

The first 19 residues, 1–19 (MKCFILAAALVLAFACIAA), serve as a signal peptide directing secretion. Positions 20 to 62 (SEPAETENEDLDDLSDLEDEEWLDELEEAAEYLESLREFEESR) are excised as a propeptide. At phenylalanine 123 the chain carries Phenylalanine amide.

Belongs to the cationic peptide 06 (cytoinsectotoxin) family. Expressed by the venom gland.

Its subcellular location is the secreted. Insecticidal and antimicrobial peptide. Has insecticidal activity against larvae of flesh fly S.carnaria. Has antibacterial activity against Gram-positive bacterium B.subtilis B-501 (MIC=2.5 uM) and Gram-negative bacterium E.coli DH5alpha (MIC=10 uM). The chain is Cytoinsectotoxin-4 from Lachesana tarabaevi (Spider).